A 74-amino-acid chain; its full sequence is U3-agatoxin-Ao1d (74 aa).

The N-terminal stretch at Met1–Ala20 is a signal peptide. The propeptide occupies Ile21–Arg34. 4 disulfide bridges follow: Cys37/Cys53, Cys44/Cys58, Cys52/Cys68, and Cys60/Cys66. Serine amide is present on Ser72.

This sequence belongs to the neurotoxin 07 (Beta/delta-agtx) family. 02 (aga-3) subfamily. As to expression, expressed by the venom gland.

Its subcellular location is the secreted. Functionally, insecticidal neurotoxin that induces an irreversible spastic paralysis when injected into insects. Modifies presynaptic voltage-gated sodium channels (Nav), causing them to open at the normal resting potential of the nerve. This leads to spontaneous release of neurotransmitter and repetitive action potentials in motor neurons. This Agelena orientalis (Funnel-web spider) protein is U3-agatoxin-Ao1d.